A 300-amino-acid polypeptide reads, in one-letter code: Fructose-bisphosphate aldolase class 1 (300 aa).

The active-site Proton acceptor is Glu181. Lys218 (schiff-base intermediate with dihydroxyacetone-P) is an active-site residue.

Belongs to the class I fructose-bisphosphate aldolase family.

It catalyses the reaction beta-D-fructose 1,6-bisphosphate = D-glyceraldehyde 3-phosphate + dihydroxyacetone phosphate. It participates in carbohydrate degradation; glycolysis; D-glyceraldehyde 3-phosphate and glycerone phosphate from D-glucose: step 4/4. This is Fructose-bisphosphate aldolase class 1 (fda) from Synechocystis sp. (strain ATCC 27184 / PCC 6803 / Kazusa).